A 132-amino-acid polypeptide reads, in one-letter code: Small ribosomal subunit protein uS8 (132 aa).

Belongs to the universal ribosomal protein uS8 family. As to quaternary structure, part of the 30S ribosomal subunit. Contacts proteins S5 and S12.

One of the primary rRNA binding proteins, it binds directly to 16S rRNA central domain where it helps coordinate assembly of the platform of the 30S subunit. This Nitrobacter winogradskyi (strain ATCC 25391 / DSM 10237 / CIP 104748 / NCIMB 11846 / Nb-255) protein is Small ribosomal subunit protein uS8.